A 382-amino-acid chain; its full sequence is D-galactonate dehydratase (382 aa).

Asp-183 lines the Mg(2+) pocket. The active-site Proton donor is the His-185. Glu-209 and Glu-235 together coordinate Mg(2+). His-285 functions as the Proton acceptor in the catalytic mechanism.

The protein belongs to the mandelate racemase/muconate lactonizing enzyme family. GalD subfamily. It depends on Mg(2+) as a cofactor.

The catalysed reaction is D-galactonate = 2-dehydro-3-deoxy-D-galactonate + H2O. Its pathway is carbohydrate acid metabolism; D-galactonate degradation; D-glyceraldehyde 3-phosphate and pyruvate from D-galactonate: step 1/3. Its function is as follows. Catalyzes the dehydration of D-galactonate to 2-keto-3-deoxy-D-galactonate. This Klebsiella pneumoniae (strain 342) protein is D-galactonate dehydratase.